A 388-amino-acid polypeptide reads, in one-letter code: 1-deoxy-D-xylulose 5-phosphate reductoisomerase (388 aa).

5 residues coordinate NADPH: T15, G16, S17, I18, and N127. K128 serves as a coordination point for 1-deoxy-D-xylulose 5-phosphate. Residue E129 participates in NADPH binding. Residue D153 coordinates Mn(2+). 1-deoxy-D-xylulose 5-phosphate-binding residues include S154, E155, S179, and H202. E155 contacts Mn(2+). Position 208 (G208) interacts with NADPH. S215, N220, K221, and E224 together coordinate 1-deoxy-D-xylulose 5-phosphate. Residue E224 participates in Mn(2+) binding.

It belongs to the DXR family. Mg(2+) is required as a cofactor. Mn(2+) serves as cofactor.

The catalysed reaction is 2-C-methyl-D-erythritol 4-phosphate + NADP(+) = 1-deoxy-D-xylulose 5-phosphate + NADPH + H(+). Its pathway is isoprenoid biosynthesis; isopentenyl diphosphate biosynthesis via DXP pathway; isopentenyl diphosphate from 1-deoxy-D-xylulose 5-phosphate: step 1/6. Its function is as follows. Catalyzes the NADPH-dependent rearrangement and reduction of 1-deoxy-D-xylulose-5-phosphate (DXP) to 2-C-methyl-D-erythritol 4-phosphate (MEP). This is 1-deoxy-D-xylulose 5-phosphate reductoisomerase from Bacteroides fragilis (strain YCH46).